The primary structure comprises 212 residues: Redox-sensing transcriptional repressor Rex (212 aa).

The segment at residues 17–56 is a DNA-binding region (H-T-H motif); that stretch reads LYARSLRYLLEEGVHSVSSQELGERINVTAAQIRKDLSYF. 91–96 provides a ligand contact to NAD(+); that stretch reads GIGLLG.

It belongs to the transcriptional regulatory Rex family. As to quaternary structure, homodimer.

It localises to the cytoplasm. Modulates transcription in response to changes in cellular NADH/NAD(+) redox state. This chain is Redox-sensing transcriptional repressor Rex, found in Chloroflexus aurantiacus (strain ATCC 29366 / DSM 635 / J-10-fl).